A 468-amino-acid chain; its full sequence is UDP-N-acetylmuramate--L-alanine ligase (468 aa).

122 to 128 (GSHGKTT) contributes to the ATP binding site.

Belongs to the MurCDEF family.

It is found in the cytoplasm. The catalysed reaction is UDP-N-acetyl-alpha-D-muramate + L-alanine + ATP = UDP-N-acetyl-alpha-D-muramoyl-L-alanine + ADP + phosphate + H(+). It functions in the pathway cell wall biogenesis; peptidoglycan biosynthesis. In terms of biological role, cell wall formation. This chain is UDP-N-acetylmuramate--L-alanine ligase, found in Synechococcus sp. (strain CC9902).